A 237-amino-acid chain; its full sequence is Ribosomally synthesized cyclic peptide ustiloxin B precursosr (237 aa).

A signal peptide spans 1–19; sequence MKLILTLLVSGLCALAAPA. Propeptides lie at residues 20–22 and 234–237; these read AKR and HGGH.

In terms of processing, ustA is processed by the subtilisin-like endoprotease kex2 that is outside the ustiloxin B gene cluster, at the C-terminal side of Arg-Lys, after transfer to Golgi apparatus through the endoplasmic reticulum (ER). Cleavage by kex2 generates 16 peptides YAIG-I to YAIG-XVI. To process the precursor peptide further, at least two peptidases are necessary to cleave the N-terminal and C-terminal sides of the Tyr-Ala-Ile-Gly core peptide which serves as backbone for the synthesis of ustiloxin B, through cyclization and modification of the tyrosine. One of the two peptidases must be the serine peptidase ustP; and the other pepdidase is probably ustH. Macrocyclization of the core peptide derived from ustA requires the tyrosinase ustQ, as well as the homologous oxidases ustYa and ustYb, and leads to the production of the first cyclization product N-desmethylustiloxin F. For the formation of N-desmethylustiloxin F, three oxidation steps are required, hydroxylation at the benzylic position, hydroxylation at either the aromatic ring of Tyr or beta-position of Ile, and oxidative cyclization. UstQ may catalyze the oxidation of a phenol moiety, whereas the ustYa and ustYb are most likely responsible for the remaining two-step oxidations. N-desmethylustiloxin F is then methylated by ustM to yield ustiloxin F which in turn substrate of the cytochrome P450 monooxygenase ustC which catalyzes the formation of S-deoxyustiloxin H. The flavoprotein monooxygenases ustF1 and ustF2 then participate in the modification of the side chain of S-deoxyustiloxin H, leading to the synthesis of an oxime intermediate, via ustiloxin H. Finally, carboxylative dehydration performed by the cysteine desulfurase-like protein ustD yields ustiloxin B.

The protein operates within mycotoxin biosynthesis. Its function is as follows. Ribosomally synthesized cyclic peptide ustiloxin B precursor: Part of the gene cluster that mediates the biosynthesis of the secondary metabolite ustiloxin B, an antimitotic tetrapeptide. The ustA translated product contains a 16-fold repeated peptide embedding the tetrapeptide Tyr-Ala-Ile-Gly, that is converted into the cyclic moiety of ustiloxin B. The polypeptide is Ribosomally synthesized cyclic peptide ustiloxin B precursosr (Aspergillus flavus (strain ATCC 200026 / FGSC A1120 / IAM 13836 / NRRL 3357 / JCM 12722 / SRRC 167)).